A 594-amino-acid polypeptide reads, in one-letter code: UvrABC system protein C (594 aa).

The GIY-YIG domain occupies 13–99 (NSSGVYQYFD…IKQLKPKYNI (87 aa)). The region spanning 205–240 (DRLIKELELKMERLSNNLRFEEALIYRDRIAKIQKI) is the UVR domain.

It belongs to the UvrC family. Interacts with UvrB in an incision complex.

The protein resides in the cytoplasm. Functionally, the UvrABC repair system catalyzes the recognition and processing of DNA lesions. UvrC both incises the 5' and 3' sides of the lesion. The N-terminal half is responsible for the 3' incision and the C-terminal half is responsible for the 5' incision. The chain is UvrABC system protein C from Helicobacter pylori (strain ATCC 700392 / 26695) (Campylobacter pylori).